A 521-amino-acid chain; its full sequence is Probable protein kinase UbiB (521 aa).

Residues 119–497 (SFDRQPVASA…QKRTNRLLQS (379 aa)) form the Protein kinase domain. Residues 125–133 (VASASIAQV) and lysine 151 each bind ATP. The active-site Proton acceptor is the aspartate 286. A helical membrane pass occupies residues 496 to 516 (QSLIYGGLGFVLGLLVMQLFV).

This sequence belongs to the ABC1 family. UbiB subfamily.

The protein resides in the cell inner membrane. It participates in cofactor biosynthesis; ubiquinone biosynthesis [regulation]. Its function is as follows. Is probably a protein kinase regulator of UbiI activity which is involved in aerobic coenzyme Q (ubiquinone) biosynthesis. The protein is Probable protein kinase UbiB of Acidovorax sp. (strain JS42).